Reading from the N-terminus, the 359-residue chain is Ribosome biogenesis protein BRX1 homolog (359 aa).

A compositionally biased stretch (basic residues) spans 1–12 (MGRKFQNKKKKA). The interval 1–42 (MGRKFQNKKKKAAPQLEIVPLDENPPLPPQRSSDDVVPKKAR) is disordered. Residues 50-241 (QRVLVFSARG…PVKIFDGSFT (192 aa)) enclose the Brix domain.

This sequence belongs to the BRX1 family.

It is found in the nucleus. Its subcellular location is the nucleolus. Required for biogenesis of the 60S ribosomal subunit. This chain is Ribosome biogenesis protein BRX1 homolog, found in Drosophila melanogaster (Fruit fly).